A 1194-amino-acid chain; its full sequence is Probable disease resistance protein RPP1 (1194 aa).

The interval 1–27 (MGSVMSLGCSKRKATNQDVDSESRKRR) is disordered. Residues 96–260 (WKHDVFPSFH…KISTDVSNML (165 aa)) enclose the TIR domain. An NAD(+)-binding site is contributed by 105-110 (HGADVR). Glu-171 is a catalytic residue. Positions 280 to 535 (DMLEQLLRLD…ACLFNGESTT (256 aa)) constitute an NB-ARC domain. LRR repeat units follow at residues 623–647 (LSNT…HFVR), 658–681 (QLAL…GYES), 690–713 (PEFL…TKQL), 714–737 (RNLK…STAT), 739–760 (LEEL…IEKL), 761–784 (TSLQ…ENAT), 786–807 (LREL…IGTA), 808–831 (TNLK…IGDI), 832–855 (TDLE…IGNL), 866–878 (CSKL…NINL), 879–899 (KSLD…PEIS), 900–922 (THIS…IMSW), 943–965 (FDII…VKRM), and 966–991 (SRLR…SLDY). The interval 1170–1194 (RRSSSPDLSPESSRVSSYDHCLRGD) is disordered. Residues 1171 to 1185 (RSSSPDLSPESSRVS) show a composition bias toward low complexity.

It belongs to the disease resistance TIR-NB-LRR family.

It carries out the reaction NAD(+) + H2O = ADP-D-ribose + nicotinamide + H(+). In terms of biological role, TIR-NB-LRR receptor-like protein that confers resistance to the pathogen Hyaloperonospora arabidopsis. Probably acts as a NAD(+) hydrolase (NADase): in response to activation, catalyzes cleavage of NAD(+) into ADP-D-ribose (ADPR) and nicotinamide; NAD(+) cleavage triggering a defense system that promotes cell death. The protein is Probable disease resistance protein RPP1 of Arabidopsis thaliana (Mouse-ear cress).